The sequence spans 137 residues: Small ribosomal subunit protein bS16 (137 aa).

2 stretches are compositionally biased toward basic and acidic residues: residues 80–99 and 111–125; these read KSPE…KRLQ and VATE…KEAP. The segment at 80 to 137 is disordered; sequence KSPEEAQKGGMRKGEFKRLQAEQAAKAQKKAVATEEPKAEEAKEAPPAESQAAEGKEE. Low complexity predominate over residues 126–137; sequence PAESQAAEGKEE.

The protein belongs to the bacterial ribosomal protein bS16 family.

This chain is Small ribosomal subunit protein bS16, found in Coxiella burnetii (strain Dugway 5J108-111).